The primary structure comprises 564 residues: MSKVDVDLGDLLAKVLPTGVKVTIRHISSAPTPCTALFTPPPGEESESTFCENHFLTVSVNADEHDGPEIIVFGIEVLVYSTAHLTTVFVSKADSTGFLHLLKNAPKVSLIRRISNGFLSFLVQTHQRPGVRLVVSLFARAQNQYLFPGSIENSGKHVLDDRGLIKWWCRVVDPILREYEPESGSHEKGLLDRAMESAKSSATAFLIVPGCDKFETRGFFPGTAKSDDKERPRWLNSYPLHQLCDNTDAPPRCLVPRFPDDPKTRFLLDLDDELPQKLEAAGSKEGAGQWRSVKSLDQFWEMMSFRQECSAGRLVGFLWLVINPPGLVNSVQMTSSRPVFKEKAEGSLTTTVPVYDKVDSKPTGTAVSVSTDSQSSDTAKDSTAEATSGGPVQDPSTQTGSLSSETHPKVQPNTDQNAFYWPEAGRGHAVMSEEDYKTAINFLLEQDFYNEKVSIASTKAWSEKVASIVDQLWVGQQVTGRNTSGESADKHAPTTNIINTGLVRKRKKDEPSQATTATSAQKEGCEGNGTVSTAVTAEASTTGTNESPGVNVLQANLIRKKKKA.

Acetyl-CoA is bound by residues phenylalanine 138, 157–159 (HVL), and tryptophan 167. The Proton donor/acceptor role is filled by aspartate 261. The residue at position 263 (lysine 263) is an N6-acetyllysine; by autocatalysis. Disordered regions lie at residues 355-420 (YDKV…NAFY) and 506-549 (RKKD…ESPG). Over residues 366–377 (AVSVSTDSQSSD) the composition is skewed to low complexity. Polar residues-rich tracts occupy residues 394 to 417 (DPSTQTGSLSSETHPKVQPNTDQN) and 512 to 521 (SQATTATSAQ). Residues 529–544 (GTVSTAVTAEASTTGT) show a composition bias toward low complexity.

Belongs to the RTT109 family.

The protein resides in the nucleus. It is found in the vacuole. It catalyses the reaction L-lysyl-[protein] + acetyl-CoA = N(6)-acetyl-L-lysyl-[protein] + CoA + H(+). It carries out the reaction L-lysyl-[histone] + acetyl-CoA = N(6)-acetyl-L-lysyl-[histone] + CoA + H(+). Its function is as follows. Histone chaperone-dependent acetylase that modifies 'Lys-56' of histone H3 (H3K56ac). Histone H3 'Lys-56' acetylation may be required for S-phase-linked DNA damage tolerance. Also acetylates 'Lys-9' of histone H3 (H3K9ac). Autoacetylates. This is Histone acetyltransferase rtt109 from Aspergillus flavus.